The following is a 406-amino-acid chain: 1H-pyrrole-2-carbonyl-[peptidyl-carrier protein] brominase (406 aa).

FAD is bound by residues A17, E36, R42, H44, I45, S48, R101, V124, D291, and V304.

This sequence belongs to the flavin-dependent halogenase family.

It catalyses the reaction (1H-pyrrole-2-carbonyl)-[peptidyl-carrier protein] + 3 bromide + 3 FADH2 + 3 O2 = (3,4,5-tribromo-1H-pyrrole-2-carbonyl)-[peptidyl-carrier protein] + 3 FAD + 6 H2O. The enzyme catalyses (1H-pyrrole-2-carbonyl)-[peptidyl-carrier protein] + bromide + FADH2 + O2 = (5-bromo-1H-pyrrole-2-carbonyl)-[peptidyl-carrier protein] + FAD + 2 H2O. The catalysed reaction is (5-bromo-1H-pyrrole-2-carbonyl)-[peptidyl-carrier protein] + bromide + FADH2 + O2 = (4,5-dibromo-1H-pyrrole-2-carbonyl)-[peptidyl-carrier protein] + FAD + 2 H2O. It carries out the reaction (4,5-dibromo-1H-pyrrole-2-carbonyl)-[peptidyl-carrier protein] + bromide + FADH2 + O2 = (3,4,5-tribromo-1H-pyrrole-2-carbonyl)-[peptidyl-carrier protein] + FAD + 2 H2O. In terms of biological role, brominase involved in the biosynthesis of polybrominated aromatic organic compounds. Catalyzes three successive rounds of bromination of pyrrolyl-S-Bmp1 to produce mono-, di- and tribromopyrrolyl-S-Bmp1. The polypeptide is 1H-pyrrole-2-carbonyl-[peptidyl-carrier protein] brominase (Pseudoalteromonas luteoviolacea (strain 2ta16)).